A 422-amino-acid polypeptide reads, in one-letter code: Metallocarboxypeptidase A (422 aa).

The signal sequence occupies residues 1-17 (MRSVLSLALLAANVVTA). Residues 18-112 (AVVSPFDYSG…FEAYSAGYAP (95 aa)) constitute a propeptide, activation peptide. The 301-residue stretch at 119-419 (SYHSYQDHLS…AGTVAMLKAV (301 aa)) folds into the Peptidase M14 domain. His179 and Glu182 together coordinate Zn(2+). Substrate contacts are provided by residues 179-182 (HARE), Arg237, and 254-255 (NR). The cysteines at positions 248 and 271 are disulfide-linked. His309 lines the Zn(2+) pocket. 310-311 (SY) serves as a coordination point for substrate. Residue Glu385 is the Proton donor/acceptor of the active site.

The protein belongs to the peptidase M14 family. It depends on Zn(2+) as a cofactor.

Its subcellular location is the secreted. Extracellular metalloprotease that contributes to pathogenicity. This is Metallocarboxypeptidase A (MCPA) from Trichophyton rubrum (Athlete's foot fungus).